A 448-amino-acid polypeptide reads, in one-letter code: Biotin carboxylase (448 aa).

The 445-residue stretch at 1–445 (MLEKVVIANR…NIHYLEKKLG (445 aa)) folds into the Biotin carboxylation domain. ATP contacts are provided by residues Lys116, Lys159, 165 to 166 (GG), 201 to 204 (EKYL), His209, and His236. An ATP-grasp domain is found at 120 to 317 (IKAMKKAGVP…LVKEQLRIAA (198 aa)). Hydrogencarbonate is bound at residue Lys238. Glu276 and Glu288 together coordinate ATP. Positions 276, 288, and 290 each coordinate Mg(2+). 3 residues coordinate Mn(2+): Glu276, Glu288, and Asn290. Positions 292, 295, and 338 each coordinate hydrogencarbonate. Arg292 is a catalytic residue. Arg338 is a biotin binding site.

Acetyl-CoA carboxylase is a heterohexamer of biotin carboxyl carrier protein, biotin carboxylase and the two subunits of carboxyl transferase in a 2:2 complex. It depends on Mg(2+) as a cofactor. The cofactor is Mn(2+).

It carries out the reaction N(6)-biotinyl-L-lysyl-[protein] + hydrogencarbonate + ATP = N(6)-carboxybiotinyl-L-lysyl-[protein] + ADP + phosphate + H(+). Its pathway is lipid metabolism; malonyl-CoA biosynthesis; malonyl-CoA from acetyl-CoA: step 1/1. Its function is as follows. This protein is a component of the acetyl coenzyme A carboxylase complex; first, biotin carboxylase catalyzes the carboxylation of the carrier protein and then the transcarboxylase transfers the carboxyl group to form malonyl-CoA. The chain is Biotin carboxylase (accC) from Haemophilus influenzae (strain ATCC 51907 / DSM 11121 / KW20 / Rd).